Reading from the N-terminus, the 212-residue chain is Fibrillarin-like rRNA/tRNA 2'-O-methyltransferase (212 aa).

Positions 1 to 37 (MSEPNLPAGVERREIGGETRLATRGPPVYGEPTADGW) are disordered. S-adenosyl-L-methionine contacts are provided by residues 74–75 (TT), 90–91 (EF), 115–116 (DA), and 136–139 (DVAT).

Belongs to the methyltransferase superfamily. Fibrillarin family. In terms of assembly, interacts with nop5. Component of box C/D small ribonucleoprotein (sRNP) particles that contain rpl7ae, FlpA and nop5, plus a guide RNA.

Functionally, involved in pre-rRNA and tRNA processing. Utilizes the methyl donor S-adenosyl-L-methionine to catalyze the site-specific 2'-hydroxyl methylation of ribose moieties in rRNA and tRNA. Site specificity is provided by a guide RNA that base pairs with the substrate. Methylation occurs at a characteristic distance from the sequence involved in base pairing with the guide RNA. In Halorubrum lacusprofundi (strain ATCC 49239 / DSM 5036 / JCM 8891 / ACAM 34), this protein is Fibrillarin-like rRNA/tRNA 2'-O-methyltransferase.